Reading from the N-terminus, the 116-residue chain is RutC family protein HI_1627 (116 aa).

This sequence belongs to the RutC family.

This chain is RutC family protein HI_1627, found in Haemophilus influenzae (strain ATCC 51907 / DSM 11121 / KW20 / Rd).